A 235-amino-acid chain; its full sequence is Vinculin (235 aa).

It belongs to the vinculin/alpha-catenin family. As to quaternary structure, exhibits self-association properties. In terms of processing, phosphorylated on serines, threonines and tyrosines. Post-translationally, acetylated by myristic acid and/or palmitic acid.

The protein localises to the cell membrane. The protein resides in the cell junction. It localises to the adherens junction. Its subcellular location is the focal adhesion. It is found in the cytoplasm. The protein localises to the cytoskeleton. The protein resides in the sarcolemma. It localises to the cell projection. Its subcellular location is the podosome. Its function is as follows. Involved in cell adhesion. May be involved in the attachment of the actin-based microfilaments to the plasma membrane. The sequence is that of Vinculin (vcl) from Xenopus laevis (African clawed frog).